Here is a 141-residue protein sequence, read N- to C-terminus: Organic hydroperoxide resistance protein-like 1 (141 aa).

A disordered region spans residues 1-20 (MAVNYETKATNTGGRNGHVQ).

It belongs to the OsmC/Ohr family.

The polypeptide is Organic hydroperoxide resistance protein-like 1 (Staphylococcus saprophyticus subsp. saprophyticus (strain ATCC 15305 / DSM 20229 / NCIMB 8711 / NCTC 7292 / S-41)).